The sequence spans 53 residues: uncharacterized protein (53 aa).

Its subcellular location is the mitochondrion matrix. The protein localises to the kinetoplast. This is an uncharacterized protein from Trypanosoma brucei brucei.